The chain runs to 250 residues: Ubiquinone/menaquinone biosynthesis C-methyltransferase UbiE (250 aa).

S-adenosyl-L-methionine is bound by residues Thr-73, Asp-94, 122–123, and Ser-139; that span reads NA.

Belongs to the class I-like SAM-binding methyltransferase superfamily. MenG/UbiE family.

It carries out the reaction a 2-demethylmenaquinol + S-adenosyl-L-methionine = a menaquinol + S-adenosyl-L-homocysteine + H(+). The catalysed reaction is a 2-methoxy-6-(all-trans-polyprenyl)benzene-1,4-diol + S-adenosyl-L-methionine = a 5-methoxy-2-methyl-3-(all-trans-polyprenyl)benzene-1,4-diol + S-adenosyl-L-homocysteine + H(+). The protein operates within quinol/quinone metabolism; menaquinone biosynthesis; menaquinol from 1,4-dihydroxy-2-naphthoate: step 2/2. Its pathway is cofactor biosynthesis; ubiquinone biosynthesis. Its function is as follows. Methyltransferase required for the conversion of demethylmenaquinol (DMKH2) to menaquinol (MKH2) and the conversion of 2-polyprenyl-6-methoxy-1,4-benzoquinol (DDMQH2) to 2-polyprenyl-3-methyl-6-methoxy-1,4-benzoquinol (DMQH2). This chain is Ubiquinone/menaquinone biosynthesis C-methyltransferase UbiE, found in Francisella tularensis subsp. holarctica (strain FTNF002-00 / FTA).